Reading from the N-terminus, the 405-residue chain is Exodeoxyribonuclease 7 large subunit (405 aa).

This sequence belongs to the XseA family. In terms of assembly, heterooligomer composed of large and small subunits.

It localises to the cytoplasm. It catalyses the reaction Exonucleolytic cleavage in either 5'- to 3'- or 3'- to 5'-direction to yield nucleoside 5'-phosphates.. In terms of biological role, bidirectionally degrades single-stranded DNA into large acid-insoluble oligonucleotides, which are then degraded further into small acid-soluble oligonucleotides. This is Exodeoxyribonuclease 7 large subunit from Syntrophomonas wolfei subsp. wolfei (strain DSM 2245B / Goettingen).